The chain runs to 328 residues: Naphthalene 1,2-dioxygenase system ferredoxin--NAD(P)(+), reductase component (328 aa).

Residues 1–89 (MELLIQPNNR…NCAIEVPEAD (89 aa)) form the 2Fe-2S ferredoxin-type domain. The [2Fe-2S] cluster site is built by Cys35, Cys40, Cys43, and Cys73. The FAD-binding FR-type domain maps to 96–193 (ARIIKGTVVA…SGPLGTAYLR (98 aa)).

This sequence belongs to the bacterial ring-hydroxylating dioxygenase ferredoxin reductase component family. As to quaternary structure, the naphthalene dioxygenase (NDO) multicomponent enzyme system is composed of an electron transfer component and a dioxygenase component (iron sulfur protein (ISP)). The electron transfer component is composed of a ferredoxin reductase (NdoR) and a ferredoxin (NdoA), and the dioxygenase component is formed of a heterohexamer (trimer of heterodimers) of three large alpha subunits (NdoB) and three small beta subunits (NdoC). The cofactor is [2Fe-2S] cluster. It depends on FAD as a cofactor.

The enzyme catalyses 2 reduced [2Fe-2S]-[ferredoxin] + NAD(+) + H(+) = 2 oxidized [2Fe-2S]-[ferredoxin] + NADH. The catalysed reaction is 2 reduced [2Fe-2S]-[ferredoxin] + NADP(+) + H(+) = 2 oxidized [2Fe-2S]-[ferredoxin] + NADPH. It participates in aromatic compound metabolism; naphthalene degradation. Its activity is regulated as follows. Strongly inhibited by p-chloromercuribenzoate. Also inhibited by N-ethylmaleimide and o-phenanthroline. Component of the naphthalene dioxygenase (NDO) multicomponent enzyme system which catalyzes the incorporation of both atoms of molecular oxygen into naphthalene to form cis-(1R,2S)-dihydroxy-1,2-dihydronaphthalene. Ferredoxin reductase catalyzes the transfer of electrons from NADH to ferredoxin (NdoA). NADPH is also effective but yields only 39% of the activity obtained with NADH. Also able to catalyze the cis-dihydroxylation of biphenyl and phenanthrene. The sequence is that of Naphthalene 1,2-dioxygenase system ferredoxin--NAD(P)(+), reductase component (ndoR) from Pseudomonas putida (Arthrobacter siderocapsulatus).